Consider the following 349-residue polypeptide: Selenide, water dikinase (349 aa).

Cys-17 is a catalytic residue. ATP contacts are provided by residues Lys-20 and 48–50; that span reads YFD. Residue Asp-51 coordinates Mg(2+). ATP-binding positions include Asp-68, Asp-91, and 139–141; that span reads GHS. Asp-91 is a binding site for Mg(2+). Residue Asp-229 participates in Mg(2+) binding.

This sequence belongs to the selenophosphate synthase 1 family. Class I subfamily. Homodimer. Mg(2+) is required as a cofactor.

The catalysed reaction is hydrogenselenide + ATP + H2O = selenophosphate + AMP + phosphate + 2 H(+). Functionally, synthesizes selenophosphate from selenide and ATP. The polypeptide is Selenide, water dikinase (Nitrosomonas eutropha (strain DSM 101675 / C91 / Nm57)).